Consider the following 331-residue polypeptide: Acyl-CoA desaturase 1 (331 aa).

Residues 1–46 (MTEVDDGCGGRLRGSVLLEDECDLKQECETPTHSLVQGRDPPVVVV) lie on the Cytoplasmic side of the membrane. The helical transmembrane segment at 47-67 (WRNVVLMSVLHTAAVYGLVLL) threads the bilayer. Asn-49 provides a ligand contact to substrate. Over 68 to 71 (PSAS) the chain is Lumenal. A helical membrane pass occupies residues 72-90 (AYTLLAFCFVSSALGITAG). The Cytoplasmic segment spans residues 91 to 189 (AHRLWSHRSY…DRVVMFQRRF (99 aa)). Fe cation is bound by residues His-92 and His-97. A Histidine box-1 motif is present at residues 92–97 (HRLWSH). Positions 120, 127, and 128 each coordinate substrate. 3 residues coordinate Fe cation: His-129, His-132, and His-133. The Histidine box-2 signature appears at 129-133 (HRVHH). Lys-161 is a binding site for substrate. A helical transmembrane segment spans residues 190–209 (YKHSVVVMCFLIPAMLPWFL). The Lumenal segment spans residues 210-213 (WAES). Residues 214–235 (LWVGYFVPVLLRYALVLNATWL) traverse the membrane as a helical segment. Substrate is bound at residue Trp-234. The Cytoplasmic segment spans residues 236-331 (VNSAAHMWGN…RTGDGSHRSG (96 aa)). Fe cation contacts are provided by His-241, His-270, His-273, and His-274. A Histidine box-3 motif is present at residues 270-274 (HNYHH).

Belongs to the fatty acid desaturase type 1 family. Requires Fe(2+) as cofactor. Expression is highest in liver, followed by brain and intestine, and lowest in spleen. Also expressed in heart, gill and muscle.

It localises to the endoplasmic reticulum membrane. The catalysed reaction is octadecanoyl-CoA + 2 Fe(II)-[cytochrome b5] + O2 + 2 H(+) = (9Z)-octadecenoyl-CoA + 2 Fe(III)-[cytochrome b5] + 2 H2O. Stearoyl-CoA desaturase that utilizes O(2) and electrons from reduced cytochrome b5 to introduce the first double bond into saturated fatty acyl-CoA substrates. Catalyzes the insertion of a cis double bond at the delta-9 position into fatty acyl-CoA substrates including palmitoyl-CoA and stearoyl-CoA. Contributes to the biosynthesis of membrane phospholipids, cholesterol esters and triglycerides. The polypeptide is Acyl-CoA desaturase 1 (Tachysurus fulvidraco (Yellow catfish)).